The primary structure comprises 133 residues: Ribosome-binding factor A (133 aa).

This sequence belongs to the RbfA family. Monomer. Binds 30S ribosomal subunits, but not 50S ribosomal subunits or 70S ribosomes.

It localises to the cytoplasm. In terms of biological role, one of several proteins that assist in the late maturation steps of the functional core of the 30S ribosomal subunit. Associates with free 30S ribosomal subunits (but not with 30S subunits that are part of 70S ribosomes or polysomes). Required for efficient processing of 16S rRNA. May interact with the 5'-terminal helix region of 16S rRNA. This Salmonella typhi protein is Ribosome-binding factor A.